A 212-amino-acid polypeptide reads, in one-letter code: RNA chaperone ProQ (212 aa).

The interval 107–153 (QDKAKAKRVAQAKSANPAAKTAKKPVKKPVAKRPKQTQSSKPAKEPV) is disordered. A compositionally biased stretch (low complexity) spans 117 to 126 (QAKSANPAAK). Over residues 127–141 (TAKKPVKKPVAKRPK) the composition is skewed to basic residues.

The protein belongs to the ProQ family.

Its subcellular location is the cytoplasm. In terms of biological role, RNA chaperone with significant RNA binding, RNA strand exchange and RNA duplexing activities. The chain is RNA chaperone ProQ from Shewanella halifaxensis (strain HAW-EB4).